Here is a 1009-residue protein sequence, read N- to C-terminus: Type VII secretion system accessory factor EsaA (1009 aa).

The next 6 helical transmembrane spans lie at 7–27 (IYALIVTLIIIIAIVSMIFFV), 822–842 (ISPTLFVLLMYLLSMITAYIF), 869–889 (VITSGVIGTTGLVEGLIVGLI), 903–923 (KFILMVILTMMVFVLINTYLL), 928–948 (SIGMFLMIAALGLYFVAMNNL), and 979–999 (IGLALVILTVLVIIGFVLNMF).

This sequence belongs to the EsaA family. Homodimer. Interacts with EssB.

It is found in the cell membrane. Its function is as follows. Component of the type VII secretion system (Ess). Provides together with EssB and other components such as EssC and EssE a secretion platform across the cytoplasmic membrane in the host. The chain is Type VII secretion system accessory factor EsaA from Staphylococcus aureus (strain Mu50 / ATCC 700699).